Here is a 287-residue protein sequence, read N- to C-terminus: Nucleotide-binding protein HEAR2885 (287 aa).

8–15 contributes to the ATP binding site; sequence GISGSGKS. 57 to 60 is a binding site for GTP; that stretch reads DVRS.

The protein belongs to the RapZ-like family.

Displays ATPase and GTPase activities. This Herminiimonas arsenicoxydans protein is Nucleotide-binding protein HEAR2885.